Reading from the N-terminus, the 456-residue chain is TGACG-sequence-specific DNA-binding protein TGA-2.1 (456 aa).

2 disordered regions span residues 1-41 (MASK…NTSR) and 115-170 (SASG…QKTL). Polar residues-rich tracts occupy residues 9-41 (GNRS…NTSR) and 125-141 (GESN…TSTD). Basic and acidic residues predominate over residues 158–169 (DKSKEKVLDQKT). Positions 166–229 (DQKTLRRLAQ…NIADQSNGVG (64 aa)) constitute a bZIP domain. The stretch at 167–220 (QKTLRRLAQNREAARKSRLRKKAYVQQLENSRLKLSQLEQDLQRARQQGKYISN) forms a coiled coil. The basic motif stretch occupies residues 168 to 188 (KTLRRLAQNREAARKSRLRKK). Residues 194–208 (LENSRLKLSQLEQDL) form a leucine-zipper region. A DOG1 domain is found at 233–450 (PLAFDAEYSR…RALSSLWLAR (218 aa)).

This sequence belongs to the bZIP family. As to quaternary structure, can form heterodimer with TGA2.2.

It is found in the nucleus. In terms of biological role, transcriptional activator that binds specifically to the DNA sequence 5'-TGACG-3'. Recognizes ocs elements like the as-1 motif of the cauliflower mosaic virus 35S promoter. Binding to the as-1-like cis elements mediate auxin- and salicylic acid-inducible transcription. This is TGACG-sequence-specific DNA-binding protein TGA-2.1 (TGA21) from Nicotiana tabacum (Common tobacco).